The chain runs to 489 residues: Rhamnulokinase (489 aa).

Residue 13 to 17 (ASSGR) coordinates ATP. An intrachain disulfide couples Cys68 to Cys222. Substrate-binding positions include Gly83 and 236 to 238 (HDT). Residue Asp237 is the Proton acceptor of the active site. Thr259 serves as a coordination point for ATP. Asn296 contributes to the substrate binding site. Gln304 serves as a coordination point for ATP. The cysteines at positions 353 and 370 are disulfide-linked. Gly402 contacts ATP. A disulfide bond links Cys413 and Cys417.

The protein belongs to the rhamnulokinase family. It depends on Mg(2+) as a cofactor.

It catalyses the reaction L-rhamnulose + ATP = L-rhamnulose 1-phosphate + ADP + H(+). It participates in carbohydrate degradation; L-rhamnose degradation; glycerone phosphate from L-rhamnose: step 2/3. Functionally, involved in the catabolism of L-rhamnose (6-deoxy-L-mannose). Catalyzes the transfer of the gamma-phosphate group from ATP to the 1-hydroxyl group of L-rhamnulose to yield L-rhamnulose 1-phosphate. The sequence is that of Rhamnulokinase from Shigella flexneri serotype 5b (strain 8401).